The following is a 137-amino-acid chain: Putative pre-16S rRNA nuclease (137 aa).

The protein belongs to the YqgF nuclease family.

It is found in the cytoplasm. Functionally, could be a nuclease involved in processing of the 5'-end of pre-16S rRNA. The sequence is that of Putative pre-16S rRNA nuclease from Actinobacillus pleuropneumoniae serotype 7 (strain AP76).